A 293-amino-acid chain; its full sequence is Xyloglucan endotransglucosylase/hydrolase protein 31 (293 aa).

The N-terminal stretch at 1-20 is a signal peptide; it reads MALSLIFLALLVLCPSSGHS. The 202-residue stretch at 29 to 230 folds into the GH16 domain; that stretch reads YPSSRVPTSP…YRYQPFVAKY (202 aa). Residue Glu114 is the Nucleophile of the active site. The active-site Proton donor is Glu118. Residues Glu118, 131–133, 141–148, and 209–210 contribute to the xyloglucan site; these read QTN, DRNVIGRE, and DW. Disulfide bonds link Cys238-Cys246 and Cys280-Cys293. Arg285 contributes to the xyloglucan binding site.

Belongs to the glycosyl hydrolase 16 family. XTH group 3 subfamily. As to quaternary structure, interacts with XTH17. The formation of an XTH17-XTH31 dimer may be required for XET activity. Contains at least one intrachain disulfide bond essential for its enzymatic activity. Predominantly expressed in root. Weakly expressed in influorescence stems. Expressed in root tips and elongation zones, stems, young leaves, flowers and siliques. Expressed in root, hypocotyl, and etiolated whole seedlings.

It is found in the secreted. The protein resides in the cell wall. The protein localises to the extracellular space. It localises to the apoplast. Its subcellular location is the cell membrane. The enzyme catalyses breaks a beta-(1-&gt;4) bond in the backbone of a xyloglucan and transfers the xyloglucanyl segment on to O-4 of the non-reducing terminal glucose residue of an acceptor, which can be a xyloglucan or an oligosaccharide of xyloglucan.. The catalysed reaction is xyloglucan + H2O = xyloglucan oligosaccharides.. Functionally, catalyzes xyloglucan endohydrolysis (XEH) and/or endotransglycosylation (XET). Cleaves and religates xyloglucan polymers, an essential constituent of the primary cell wall, and thereby participates in cell wall construction of growing tissues. Involved in the accumulation of hemicelluloses. Has a high XEH activity and only a slight XET activity in vitro, but the main in planta activity seems to be XET, thus controlling aluminum sensitivity. Acceptor preferences are XXXGol = XXFGol &gt; XXLGol &gt; XLLGol = XLFGol. In Arabidopsis thaliana (Mouse-ear cress), this protein is Xyloglucan endotransglucosylase/hydrolase protein 31.